Consider the following 204-residue polypeptide: Tat proofreading chaperone DmsD (204 aa).

The protein belongs to the TorD/DmsD family. DmsD subfamily.

Required for biogenesis/assembly of DMSO reductase, but not for the interaction of the DmsA signal peptide with the Tat system. May be part of a chaperone cascade complex that facilitates a folding-maturation pathway for the substrate protein. The protein is Tat proofreading chaperone DmsD of Escherichia coli O157:H7.